Reading from the N-terminus, the 175-residue chain is Co-chaperone protein HscB homolog (175 aa).

A J domain is found at 7–79 (SHFDLFHLPA…LKRATYLLHL (73 aa)).

This sequence belongs to the HscB family. In terms of assembly, interacts with HscA and stimulates its ATPase activity.

Its function is as follows. Co-chaperone involved in the maturation of iron-sulfur cluster-containing proteins. Seems to help targeting proteins to be folded toward HscA. The protein is Co-chaperone protein HscB homolog of Burkholderia mallei (strain ATCC 23344).